We begin with the raw amino-acid sequence, 511 residues long: Protoheme IX farnesyltransferase, mitochondrial (511 aa).

Residues 1 to 23 (MSSSTESLPGTLRRTLTTSRAPA) constitute a mitochondrion transit peptide. Disordered regions lie at residues 1–27 (MSSS…ATSS) and 50–136 (HDSA…LAPD). 3 stretches are compositionally biased toward low complexity: residues 52–79 (SASS…SSTT), 104–115 (RKAAAAAAAAAA), and 126–136 (PDAPTADLAPD). 8 helical membrane-spanning segments follow: residues 168–188 (LTVL…VPSF), 197–217 (SLAP…TTLC), 253–273 (AAVL…YFGV), 275–295 (PTVS…YTPL), 303–323 (TWVG…AAAG), 344–364 (LGGW…FMPL), 398–418 (AFIP…SFAV), and 444–464 (ARGL…LALA).

It belongs to the UbiA prenyltransferase family.

Its subcellular location is the mitochondrion membrane. In terms of biological role, converts protoheme IX and farnesyl diphosphate to heme O. This is Protoheme IX farnesyltransferase, mitochondrial (pft-1) from Neurospora crassa (strain ATCC 24698 / 74-OR23-1A / CBS 708.71 / DSM 1257 / FGSC 987).